We begin with the raw amino-acid sequence, 306 residues long: Pantothenate kinase (306 aa).

91–98 contacts ATP; the sequence is GSVAVGKS.

It belongs to the prokaryotic pantothenate kinase family.

The protein resides in the cytoplasm. It carries out the reaction (R)-pantothenate + ATP = (R)-4'-phosphopantothenate + ADP + H(+). The protein operates within cofactor biosynthesis; coenzyme A biosynthesis; CoA from (R)-pantothenate: step 1/5. The protein is Pantothenate kinase of Streptococcus equi subsp. equi (strain 4047).